The chain runs to 314 residues: Short-chain dehydrogenase/reductase drtF (314 aa).

Valine 26, lysine 50, aspartate 73, asparagine 100, tyrosine 185, and lysine 189 together coordinate NADP(+). The active-site Proton acceptor is the tyrosine 185. The active-site Lowers pKa of active site Tyr is the lysine 189.

It belongs to the short-chain dehydrogenases/reductases (SDR) family.

It participates in secondary metabolite biosynthesis; terpenoid biosynthesis. Functionally, short-chain dehydrogenase/reductase; part of the gene cluster that mediates the biosynthesis of various drimane-type sesquiterpene esters, compounds that exhibit diverse biological activities and are widely present in eukaryotes. The pathway begins with the synthesis of the backbone drimenol by the terpene cyclase drtB using farnesyl pyrophosphate (FPP) as substrate. The cytochrome P450 monooxygenase drtD is then responsible for the hydroxylations at C-6, C-9 and C-12, as well as the oxidation of hydroxyl groups at C-6 and C-11 to a ketone and an aldehyde, respectively. Then, the biosynthesis can go in two directions, either the hydroxylated drimenol is further hydroxylated at C-2 and C-3 by an enzyme(s) not associated with the drt cluster, or the FAD-binding oxidoreductase drtC further oxidizes C-11 or C-12 to form the butyrolactone ring. DrtB, drtD and drtC are solely responsible for the formation of the different drimane structures observed during drimane sesquiterpenes biosynthesis. The polyketide synthase drtA synthesizes different lengths (C6 and C8) of PKS chains, which are then oxidized to varying degrees by the short-chain dehydrogenase drtF. Finally, these PKS chains are transferred onto drimane sesquiterpenes by the acyltransferase drtE, forming the sesquiterpene esters. In addition to the different fatty acyl-CoA chains produced by drtA, drtE is also able to use cinnamoyl-CoA as a substrate. This Aspergillus calidoustus protein is Short-chain dehydrogenase/reductase drtF.